A 483-amino-acid chain; its full sequence is Dual specificity protein phosphatase 10 (483 aa).

The 118-residue stretch at 169–286 folds into the Rhodanese domain; sequence PSQGPVIIDC…FKQNHGNLCD (118 aa). The interaction with MAP kinases stretch occupies residues 200–216; the sequence is KISRRRLQQGKITVLDL. A Tyrosine-protein phosphatase domain is found at 322 to 465; sequence ELTPILPFLF…LLEFEEDLNN (144 aa). The active-site Phosphocysteine intermediate is Cys-409.

The protein belongs to the protein-tyrosine phosphatase family. Non-receptor class dual specificity subfamily. As to quaternary structure, monomer. Interacts with MAPK14.

It is found in the cytoplasm. It localises to the nucleus. The enzyme catalyses O-phospho-L-tyrosyl-[protein] + H2O = L-tyrosyl-[protein] + phosphate. It carries out the reaction O-phospho-L-seryl-[protein] + H2O = L-seryl-[protein] + phosphate. The catalysed reaction is O-phospho-L-threonyl-[protein] + H2O = L-threonyl-[protein] + phosphate. Protein phosphatase involved in the inactivation of MAP kinases. Has a specificity for the MAPK11/MAPK12/MAPK13/MAPK14 subfamily. It preferably dephosphorylates p38. The protein is Dual specificity protein phosphatase 10 (Dusp10) of Mus musculus (Mouse).